A 156-amino-acid polypeptide reads, in one-letter code: Succinate dehydrogenase [ubiquinone] cytochrome b small subunit 1, mitochondrial (156 aa).

Residues 1–25 (MLSAVRRAIPLSARILRTSLIQRCA) constitute a mitochondrion transit peptide. Over 26–59 (GATSAAVTGAAPPQFDPIAAEKGFKPLHSHGTLF) the chain is Mitochondrial matrix. Residues 60-78 (KIERYFAAAMVPLIPAAYF) form a helical membrane-spanning segment. Topologically, residues 79-83 (IHGRE) are mitochondrial intermembrane. A helical transmembrane segment spans residues 84-104 (MDLCLALALTLHVHWGVWGVV). Histidine 95 serves as a coordination point for heme b. Residues 105-119 (NDYGRPFVLGDTLAA) lie on the Mitochondrial matrix side of the membrane. Tyrosine 107 serves as a coordination point for a rhodoquinol. Residues 120 to 141 (AVRVGAYIFTACLLAGLLYFNE) form a helical membrane-spanning segment. Topologically, residues 142-156 (HDVGLTRAFEMVWEL) are mitochondrial intermembrane.

The protein belongs to the CybS family. In terms of assembly, component of the mitochondrial electron transport chain complex II composed of four subunits: a flavoprotein (Fp), an iron-sulfur protein (Ip), and a large cytochrome b (CybL) subunit and a small cytochrome b (CybS) subunit. There are 2 developmental stage-specific forms of complex II which have the Ip and CybL subunits in common. Complex II from the free-living larvae (aerobic environment) acts as a succinate dehydrogenase and is composed of the common subunit Ip and CybL and the stage specific subunits FpL and CybSL. Complex II from parasitic larvae and adults (anaerobic environment) acts as a fumarate reductase and is composed of the common subunit Ip and CybL and the stage specific subunits FpA and CybSA. It depends on heme b as a cofactor. Expressed in adult muscles (at protein level).

The protein localises to the mitochondrion inner membrane. Membrane-bound small subunit (CybS) of the mitochondrial electron transport chain complex II, which together with the membrane-bound large subunit (CybL), anchor the catalytic subunits to the inner mitochondria membrane. During the parasitic larvae and adult stages, which occur in an anaerobic environment, complex II acts as a fumarate reductase by transferring electrons from rhodoquinol to fumarate. The sequence is that of Succinate dehydrogenase [ubiquinone] cytochrome b small subunit 1, mitochondrial from Ascaris suum (Pig roundworm).